The following is a 377-amino-acid chain: Chaperone protein DnaJ (377 aa).

A J domain is found at 5 to 70 (DYYEVLEVSR…EKRTIYDRYG (66 aa)). The segment at 138–215 (GCEKKIDITY…CQGKGYHEET (78 aa)) adopts a CR-type zinc-finger fold. Residues cysteine 151, cysteine 154, cysteine 167, cysteine 170, cysteine 189, cysteine 192, cysteine 203, and cysteine 206 each contribute to the Zn(2+) site. CXXCXGXG motif repeat units lie at residues 151 to 158 (CEECGGTG), 167 to 174 (CDYCGGQG), 189 to 196 (CPKCHGEG), and 203 to 210 (CPSCQGKG).

It belongs to the DnaJ family. Homodimer. Requires Zn(2+) as cofactor.

The protein resides in the cytoplasm. Functionally, participates actively in the response to hyperosmotic and heat shock by preventing the aggregation of stress-denatured proteins and by disaggregating proteins, also in an autonomous, DnaK-independent fashion. Unfolded proteins bind initially to DnaJ; upon interaction with the DnaJ-bound protein, DnaK hydrolyzes its bound ATP, resulting in the formation of a stable complex. GrpE releases ADP from DnaK; ATP binding to DnaK triggers the release of the substrate protein, thus completing the reaction cycle. Several rounds of ATP-dependent interactions between DnaJ, DnaK and GrpE are required for fully efficient folding. Also involved, together with DnaK and GrpE, in the DNA replication of plasmids through activation of initiation proteins. This is Chaperone protein DnaJ from Sulfurovum sp. (strain NBC37-1).